Here is a 177-residue protein sequence, read N- to C-terminus: Large ribosomal subunit protein uL6 (177 aa).

Belongs to the universal ribosomal protein uL6 family. Part of the 50S ribosomal subunit.

Functionally, this protein binds to the 23S rRNA, and is important in its secondary structure. It is located near the subunit interface in the base of the L7/L12 stalk, and near the tRNA binding site of the peptidyltransferase center. This is Large ribosomal subunit protein uL6 from Actinobacillus pleuropneumoniae serotype 5b (strain L20).